The chain runs to 315 residues: Beta-ketoacyl-[acyl-carrier-protein] synthase III 2 (315 aa).

Residues Cys113 and His241 contribute to the active site. Residues 242-246 form an ACP-binding region; sequence QANLR. The active site involves Asn271.

This sequence belongs to the thiolase-like superfamily. FabH family. Homodimer.

The protein localises to the cytoplasm. The enzyme catalyses malonyl-[ACP] + acetyl-CoA + H(+) = 3-oxobutanoyl-[ACP] + CO2 + CoA. It participates in lipid metabolism; fatty acid biosynthesis. Catalyzes the condensation reaction of fatty acid synthesis by the addition to an acyl acceptor of two carbons from malonyl-ACP. Catalyzes the first condensation reaction which initiates fatty acid synthesis and may therefore play a role in governing the total rate of fatty acid production. Possesses both acetoacetyl-ACP synthase and acetyl transacylase activities. Its substrate specificity determines the biosynthesis of branched-chain and/or straight-chain of fatty acids. The sequence is that of Beta-ketoacyl-[acyl-carrier-protein] synthase III 2 from Streptomyces avermitilis (strain ATCC 31267 / DSM 46492 / JCM 5070 / NBRC 14893 / NCIMB 12804 / NRRL 8165 / MA-4680).